The primary structure comprises 51 residues: Large ribosomal subunit protein bL33 (51 aa).

The protein belongs to the bacterial ribosomal protein bL33 family.

This chain is Large ribosomal subunit protein bL33, found in Nitrosococcus oceani (strain ATCC 19707 / BCRC 17464 / JCM 30415 / NCIMB 11848 / C-107).